The chain runs to 1015 residues: GTPase-activating Rap/Ran-GAP domain-like protein 3 (1015 aa).

One can recognise a Rap-GAP domain in the interval 200 to 416 (LLVLEEQEGS…RTLDMLIRSL (217 aa)). Residues 498–812 (PYDIVCGDSW…QLTASRSDIY (315 aa)) enclose the CNH domain. Disordered regions lie at residues 821-842 (SASN…PTGY) and 924-1004 (ELLG…FTFS). Residues 823–835 (SNCSSRDTSSQSS) are compositionally biased toward low complexity. Positions 949-959 (KNKEEEQKRTA) are enriched in basic and acidic residues.

This sequence belongs to the GARNL3 family.

The polypeptide is GTPase-activating Rap/Ran-GAP domain-like protein 3 (garnl3) (Danio rerio (Zebrafish)).